A 284-amino-acid chain; its full sequence is MNVIEVEDVSFRYGNSREYSLRHINLEIRKGEFLGIIGPSGSGKSTFCLTLNGLIPHSIAGEFHGNVIVDGLNTREHSVSELSTKVGLVFQNPDSQLFNMTVLEEVAFALENLGIERDEMWRRIRWALKLVRLWDKREEFPPNLSGGEKQRLAIASVLVMKPKVLVLDEPTSQLDPLGREEVLGLIKLLNKEEKITIILVEHNTDFLLEHADRIVVFDKGRIVLEGKPEDVFENVEFLRTIGVKLPTRVKIGYELKKRGLVERAVLTRDEVVEVLKWAYLRGKS.

In terms of domain architecture, ABC transporter spans 4-244 (IEVEDVSFRY…VEFLRTIGVK (241 aa)). ATP is bound at residue 38–45 (GPSGSGKS).

Belongs to the ABC transporter superfamily.

It is found in the cell membrane. In terms of biological role, probably part of an ABC transporter complex. Responsible for energy coupling to the transport system. The polypeptide is Putative ABC transporter ATP-binding protein PH1815 (Pyrococcus horikoshii (strain ATCC 700860 / DSM 12428 / JCM 9974 / NBRC 100139 / OT-3)).